The following is a 440-amino-acid chain: Xylose isomerase (440 aa).

Active-site residues include histidine 101 and aspartate 104. Glutamate 232, glutamate 268, histidine 271, aspartate 296, aspartate 307, aspartate 309, and aspartate 339 together coordinate Mg(2+).

This sequence belongs to the xylose isomerase family. As to quaternary structure, homotetramer. Mg(2+) is required as a cofactor.

It localises to the cytoplasm. The catalysed reaction is alpha-D-xylose = alpha-D-xylulofuranose. In Escherichia coli (strain SE11), this protein is Xylose isomerase.